The following is a 359-amino-acid chain: MQVLRHSEHTLKTALLSKNPVLVSQYEKLDAGEQRLMNEAFQPRSNLFEPITVHSQSDWISSHPEAPQDFEQFFSDRYRKAPCPKKHIIYIQSIGSLGNTRVISEEYIKWLKGYCEAFFYGLKVKFLEPVSVSETKCSFRVNEHTQNLQIHTGHILAFLKKNKPEDAFCIVGITMIDLYPRDSWNFVFGQASLSSGVGIFSFARYGKDFYTSKYEGNVTSLQLTSPTDYSIFDNYYIPEITSVLLLRSCKTLTHEIGHILGLRHCQWLACLMQGSNHLEESDRRPLNVCPICLRKLQSAIGFNIVERYRALVKWIDDESCNESGATPKSSSEHAHLPKPVEAFKDWREWLMRCIALLEK.

His254 is a Zn(2+) binding site. The Proton acceptor role is filled by Glu255. The Zn(2+) site is built by His258, His264, Cys265, Cys270, Cys289, and Cys292.

The protein belongs to the peptidase M54 family. It depends on Zn(2+) as a cofactor. In terms of tissue distribution, predominantly expressed in testis.

Probable zinc metalloprotease. The sequence is that of Archaemetzincin-2 (Amz2) from Mus musculus (Mouse).